The chain runs to 351 residues: Small ribosomal subunit protein uS2 (351 aa).

Residues 302 to 351 are disordered; sequence QNNYDPSKRGYNPKYVNHKSTFNKFNNKKPAEATSQAKTNEKIVIKAETN. Residues 340 to 351 show a composition bias toward basic and acidic residues; the sequence is TNEKIVIKAETN.

Belongs to the universal ribosomal protein uS2 family.

This Ureaplasma urealyticum serovar 10 (strain ATCC 33699 / Western) protein is Small ribosomal subunit protein uS2.